The chain runs to 97 residues: UstYa family oxidase VicYc (97 aa).

Short sequence motifs (HXXHC) lie at residues 11–15 (HELHC) and 38–42 (HANHC).

Belongs to the ustYa family.

Its pathway is mycotoxin biosynthesis. In terms of biological role, ustYa family oxidase, part of the gene cluster that mediates the biosynthesis of the secondary metabolite victorin, the molecular basis for Victoria blight of oats. The role of vicYc within the pathway has still to be determined. The pathway starts with the processing of the precursor vicA1 by several endopeptidases including kexin proteases as well as the cluster-specific S28 family peptidases vicPa and vicPb to produce 7 identical copies of the hexapeptide Gly-Leu-Lys-Leu-Ala-Phe. After being excised from the precursor peptide, the core peptides are cyclized and modified post-translationally by enzymes encoded within the gene cluster. The ustYa family oxidase vicYb is required for the formation of the macrocycle in victorin and the copper amine oxidases (CAOs) vicK1 and vicK2 are responsible for converting victorin to the active form by oxidizing the N-terminal glycyl residue in the peptides to glyoxylate. Relaxed substrate specificity of enzymes in the victorin biosynthetic pathway results in a metabolic grid that produces a set of analogs including victorinines B, C, E or HV-toxin M. The polypeptide is UstYa family oxidase VicYc (Bipolaris victoriae (strain FI3) (Victoria blight of oats agent)).